The primary structure comprises 319 residues: ATP-dependent 6-phosphofructokinase (319 aa).

Position 11 (G11) interacts with ATP. ADP-binding positions include 21 to 25 and D59; that span reads RSVVR. ATP-binding positions include 72–73 and 102–105; these read RC and GDGS. D103 is a binding site for Mg(2+). 125 to 127 serves as a coordination point for substrate; that stretch reads TID. D127 acts as the Proton acceptor in catalysis. R154 lines the ADP pocket. Substrate contacts are provided by residues R162 and 169 to 171; that span reads MGR. ADP is bound by residues 185–187, R211, and 213–215; these read GAE and KKH. Residues E222, R243, and 249-252 contribute to the substrate site; that span reads HVQR.

It belongs to the phosphofructokinase type A (PFKA) family. ATP-dependent PFK group I subfamily. Prokaryotic clade 'B1' sub-subfamily. In terms of assembly, homotetramer. Mg(2+) serves as cofactor.

The protein localises to the cytoplasm. It catalyses the reaction beta-D-fructose 6-phosphate + ATP = beta-D-fructose 1,6-bisphosphate + ADP + H(+). Its pathway is carbohydrate degradation; glycolysis; D-glyceraldehyde 3-phosphate and glycerone phosphate from D-glucose: step 3/4. With respect to regulation, allosterically activated by ADP and other diphosphonucleosides, and allosterically inhibited by phosphoenolpyruvate. Catalyzes the phosphorylation of D-fructose 6-phosphate to fructose 1,6-bisphosphate by ATP, the first committing step of glycolysis. The sequence is that of ATP-dependent 6-phosphofructokinase from Geobacillus stearothermophilus (Bacillus stearothermophilus).